The primary structure comprises 315 residues: Ribosomal RNA small subunit methyltransferase H (315 aa).

S-adenosyl-L-methionine is bound by residues 35–37, D55, F80, D102, and Q109; that span reads GGH.

Belongs to the methyltransferase superfamily. RsmH family.

The protein localises to the cytoplasm. It catalyses the reaction cytidine(1402) in 16S rRNA + S-adenosyl-L-methionine = N(4)-methylcytidine(1402) in 16S rRNA + S-adenosyl-L-homocysteine + H(+). Functionally, specifically methylates the N4 position of cytidine in position 1402 (C1402) of 16S rRNA. The chain is Ribosomal RNA small subunit methyltransferase H from Shewanella pealeana (strain ATCC 700345 / ANG-SQ1).